We begin with the raw amino-acid sequence, 137 residues long: Mitochondrial intermembrane space import and assembly protein 40 (137 aa).

3 disulfide bridges follow: cysteine 53-cysteine 55, cysteine 64-cysteine 97, and cysteine 74-cysteine 87. Residues 61 to 105 (SGPCGEQFKAAFSCFHYSKEDVKGSDCVDQFRAMQECMQKYPDLY) form the CHCH domain. 2 consecutive short sequence motifs (cx9C motif) follow at residues 64–74 (CGEQFKAAFSC) and 87–97 (CVDQFRAMQEC). Positions 102–137 (PDLYPQEEEEEEEQPADPLPEAASEASATKEAAASS) are disordered. Over residues 106–116 (PQEEEEEEEQP) the composition is skewed to acidic residues. The span at 120–137 (LPEAASEASATKEAAASS) shows a compositional bias: low complexity.

In terms of assembly, monomer. Can form homooligomers. Interacts with GFER and forms transient disulfide bonds with GFER. Interacts with MICU1. Interacts with COX19 forming transient intermolecular disulfide bridges. Interacts with COA7 through transient intermolecular disulfide bonds. Interacts with AIFM1; the interaction increases in presence of NADH. Interacts with NDUFB10. Forms intrachain disulfide bridges, but exists in different redox states.

The protein resides in the mitochondrion intermembrane space. Its function is as follows. Central component of a redox-sensitive mitochondrial intermembrane space import machinery which is required for the biogenesis of respiratory chain complexes. Functions as a chaperone and catalyzes the formation of disulfide bonds in substrate proteins, such as COX17, COX19, MICU1 and COA7. Required for the import and folding of small cysteine-containing proteins (small Tim) in the mitochondrial intermembrane space (IMS). Required for the import of COA7 in the IMS. Precursor proteins to be imported into the IMS are translocated in their reduced form into the mitochondria. The oxidized form of CHCHD4/MIA40 forms a transient intermolecular disulfide bridge with the reduced precursor protein, resulting in oxidation of the precursor protein that now contains an intramolecular disulfide bond and is able to undergo folding in the IMS. Reduced CHCHD4/MIA40 is then reoxidized by GFER/ERV1 via a disulfide relay system. Mediates formation of disulfide bond in MICU1 in the IMS, promoting formation of the MICU1-MICU2 heterodimer that regulates mitochondrial calcium uptake. The chain is Mitochondrial intermembrane space import and assembly protein 40 (CHCHD4) from Bos taurus (Bovine).